Reading from the N-terminus, the 420-residue chain is Serine--tRNA ligase (420 aa).

227–229 (TSE) is an L-serine binding site. Residues 258–260 (RRE) and V274 each bind ATP. E281 contacts L-serine. 345-348 (ELTS) is an ATP binding site. T380 contacts L-serine.

The protein belongs to the class-II aminoacyl-tRNA synthetase family. Type-1 seryl-tRNA synthetase subfamily. Homodimer. The tRNA molecule binds across the dimer.

It localises to the cytoplasm. It carries out the reaction tRNA(Ser) + L-serine + ATP = L-seryl-tRNA(Ser) + AMP + diphosphate + H(+). The catalysed reaction is tRNA(Sec) + L-serine + ATP = L-seryl-tRNA(Sec) + AMP + diphosphate + H(+). It participates in aminoacyl-tRNA biosynthesis; selenocysteinyl-tRNA(Sec) biosynthesis; L-seryl-tRNA(Sec) from L-serine and tRNA(Sec): step 1/1. In terms of biological role, catalyzes the attachment of serine to tRNA(Ser). Is also able to aminoacylate tRNA(Sec) with serine, to form the misacylated tRNA L-seryl-tRNA(Sec), which will be further converted into selenocysteinyl-tRNA(Sec). The sequence is that of Serine--tRNA ligase from Nocardia farcinica (strain IFM 10152).